Here is a 368-residue protein sequence, read N- to C-terminus: Phospho-N-acetylmuramoyl-pentapeptide-transferase (368 aa).

9 helical membrane-spanning segments follow: residues 2–22 (IALIIGMLVSLIVTLVGTPLL), 51–71 (TLGGVVINFAILLGWASSALY), 80–100 (PSWSAALVLFAMLSMGLLGFI), 117–137 (GGKFIGQFIFATIYAVLALLI), 167–187 (VAIILFVIWVNFLMTAWTNAV), 193–213 (LDGLAAGSSMIAFTGFGIIAF), 234–254 (PLDLTVIAVCAAVACFGFLWY), 271–291 (LGGLFAALSIATHTEFLAVVL), and 340–360 (FWMIELIFVLLALTIFYGDWV).

It belongs to the glycosyltransferase 4 family. MraY subfamily. The cofactor is Mg(2+).

The protein resides in the cell membrane. The catalysed reaction is UDP-N-acetyl-alpha-D-muramoyl-L-alanyl-gamma-D-glutamyl-meso-2,6-diaminopimeloyl-D-alanyl-D-alanine + di-trans,octa-cis-undecaprenyl phosphate = di-trans,octa-cis-undecaprenyl diphospho-N-acetyl-alpha-D-muramoyl-L-alanyl-D-glutamyl-meso-2,6-diaminopimeloyl-D-alanyl-D-alanine + UMP. It functions in the pathway cell wall biogenesis; peptidoglycan biosynthesis. Catalyzes the initial step of the lipid cycle reactions in the biosynthesis of the cell wall peptidoglycan: transfers peptidoglycan precursor phospho-MurNAc-pentapeptide from UDP-MurNAc-pentapeptide onto the lipid carrier undecaprenyl phosphate, yielding undecaprenyl-pyrophosphoryl-MurNAc-pentapeptide, known as lipid I. This Bifidobacterium longum (strain DJO10A) protein is Phospho-N-acetylmuramoyl-pentapeptide-transferase.